A 349-amino-acid chain; its full sequence is uncharacterized protein (349 aa).

Residues 1 to 29 (MKQKYENYFKKRLILNLLIFLLLACSSES) form the signal peptide.

This is an uncharacterized protein from Borreliella burgdorferi (strain ATCC 35210 / DSM 4680 / CIP 102532 / B31) (Borrelia burgdorferi).